Here is a 194-residue protein sequence, read N- to C-terminus: Protein LURP-one-related 10 (194 aa).

This sequence belongs to the LOR family.

Functionally, might be related to the phospholipid scramblase and tubby-like superfamily of membrane tethered transcription factors. This Arabidopsis thaliana (Mouse-ear cress) protein is Protein LURP-one-related 10.